A 302-amino-acid chain; its full sequence is Sulfate adenylyltransferase subunit 2 (302 aa).

The segment at glutamate 279–phenylalanine 302 is disordered. Basic and acidic residues predominate over residues arginine 280–phenylalanine 302.

The protein belongs to the PAPS reductase family. CysD subfamily. As to quaternary structure, heterodimer composed of CysD, the smaller subunit, and CysN.

The catalysed reaction is sulfate + ATP + H(+) = adenosine 5'-phosphosulfate + diphosphate. It functions in the pathway sulfur metabolism; hydrogen sulfide biosynthesis; sulfite from sulfate: step 1/3. Functionally, with CysN forms the ATP sulfurylase (ATPS) that catalyzes the adenylation of sulfate producing adenosine 5'-phosphosulfate (APS) and diphosphate, the first enzymatic step in sulfur assimilation pathway. APS synthesis involves the formation of a high-energy phosphoric-sulfuric acid anhydride bond driven by GTP hydrolysis by CysN coupled to ATP hydrolysis by CysD. This chain is Sulfate adenylyltransferase subunit 2, found in Aliivibrio fischeri (strain ATCC 700601 / ES114) (Vibrio fischeri).